Reading from the N-terminus, the 1939-residue chain is Myosin heavy chain, skeletal muscle, adult (1939 aa).

A2 carries the N-acetylalanine modification. The Myosin N-terminal SH3-like domain maps to 34–83; the sequence is DAKSSVFVVHPKESFVKGTIQSKEGGKVTVKTEGGETLTVKEDQVFSMNP. K36 carries the post-translational modification N6-methyllysine. One can recognise a Myosin motor domain in the interval 87-781; it reads DKIEDMAMMT…LLGLLEEMRD (695 aa). Position 131 is an N6,N6,N6-trimethyllysine (K131). 180–187 contacts ATP; that stretch reads GESGAGKT. At K552 the chain carries N6,N6,N6-trimethyllysine. The segment at 658 to 680 is actin-binding; that stretch reads LNKLMANLRSTHPHFVRCIIPNE. At H756 the chain carries Pros-methylhistidine. Residues 760-774 form an actin-binding region; sequence RFGHTKVFFKAGLLG. The region spanning 784–813 is the IQ domain; the sequence is LAEIITRTQARCRGFLMRVEYRRMVERRES. The hinge stretch occupies residues 839 to 841; that stretch reads IKP. Residues 842–1939 are a coiled coil; that stretch reads LLKSAESEKE…IHGKKIEEEE (1098 aa).

It belongs to the TRAFAC class myosin-kinesin ATPase superfamily. Myosin family. In terms of assembly, muscle myosin is a hexameric protein that consists of 2 heavy chain subunits (MHC), 2 alkali light chain subunits (MLC) and 2 regulatory light chain subunits (MLC-2).

The protein localises to the cytoplasm. The protein resides in the myofibril. Muscle contraction. Myosin is a protein that binds to F-actin and has ATPase activity that is activated by F-actin. The sequence is that of Myosin heavy chain, skeletal muscle, adult from Gallus gallus (Chicken).